The following is a 455-amino-acid chain: Oxysterols receptor LXR-beta (455 aa).

Residues 1–10 (MSTPTTNSVD) show a composition bias toward polar residues. The disordered stretch occupies residues 1 to 53 (MSTPTTNSVDTPLPGNGPSTPSSSPGGKEDGPEPCPGGADPDVPSTDGADSAS). The segment at 1–80 (MSTPTTNSVD…GPAPKMLGDE (80 aa)) is transactivation AF-1; required for ligand-independent transactivation function. Residues 14–26 (PGNGPSTPSSSPG) show a composition bias toward low complexity. Residues 79–156 (DELCQVCGDT…AGMREQCVLS (78 aa)) constitute a DNA-binding region (nuclear receptor). 2 consecutive NR C4-type zinc fingers follow at residues 82 to 102 (CQVC…CEGC) and 120 to 144 (CRGG…LRKC). The tract at residues 164–210 (KIRKQQQQQQQQSSPTGPGVSSSSPASGPGASPGGSDGGGQGSGEGE) is disordered. Residues 168 to 193 (QQQQQQQQSSPTGPGVSSSSPASGPG) are compositionally biased toward low complexity. Residues 194–210 (ASPGGSDGGGQGSGEGE) are compositionally biased toward gly residues. Positions 214–455 (LTAAQELMIQ…LLSEIWDVHE (242 aa)) are transactivation AF-2; required for ligand-dependent transactivation function; mediates interaction with CCAR2. Residues 217–455 (AQELMIQQLV…LLSEIWDVHE (239 aa)) form the NR LBD domain. Glycyl lysine isopeptide (Lys-Gly) (interchain with G-Cter in SUMO2) cross-links involve residues Lys-404 and Lys-442.

This sequence belongs to the nuclear hormone receptor family. NR1 subfamily. In terms of assembly, forms a heterodimer with RXR. Interacts with CCAR2 (via N-terminus) in a ligand-independent manner. Interacts (when sumoylated) with GPS2; interaction with GPS2 onto hepatic acute phase protein promoters prevents N-Cor corepressor complex dissociation. Interacts with ABCA12 and ABCA1; this interaction is required for ABCA1 localization to the cell surface and is necessary for its normal activity and stability. In terms of processing, sumoylated by SUMO2 at Lys-404 and Lys-442 during the hepatic acute phase response, leading to promote interaction with GPS2 and prevent N-Cor corepressor complex dissociation.

The protein resides in the nucleus. Its function is as follows. Nuclear receptor that exhibits a ligand-dependent transcriptional activation activity. Binds preferentially to double-stranded oligonucleotide direct repeats having the consensus half-site sequence 5'-AGGTCA-3' and 4-nt spacing (DR-4). Regulates cholesterol uptake through MYLIP-dependent ubiquitination of LDLR, VLDLR and LRP8; DLDLR and LRP8. Interplays functionally with RORA for the regulation of genes involved in liver metabolism. Induces LPCAT3-dependent phospholipid remodeling in endoplasmic reticulum (ER) membranes of hepatocytes, driving SREBF1 processing and lipogenesis. Via LPCAT3, triggers the incorporation of arachidonate into phosphatidylcholines of ER membranes, increasing membrane dynamics and enabling triacylglycerols transfer to nascent very low-density lipoprotein (VLDL) particles. Via LPCAT3 also counteracts lipid-induced ER stress response and inflammation, likely by modulating SRC kinase membrane compartmentalization and limiting the synthesis of lipid inflammatory mediators. Plays an anti-inflammatory role during the hepatic acute phase response by acting as a corepressor: inhibits the hepatic acute phase response by preventing dissociation of the N-Cor corepressor complex. In Bos taurus (Bovine), this protein is Oxysterols receptor LXR-beta (NR1H2).